The primary structure comprises 356 residues: MKREQLIQNIEKLKHVMPPYVLEYYQSKLTIPYSLNTLYEYLKEYERFFSWLVDSGVADVDKITDVSLSVLENLTKRDLESFILYLRERPRLNTHSTRYGVSQTTINRTLSALSSLYKYLTEEVENEDGEPYFYRNVMKKVQTKKKSETLASRAENIKGKLFLGDETQGFLDYIDSEYEKTLSNRARSSFFKNKERDLAIIALILASGIRLSEAVNVDLRDLNLNTMIVEVTRKGGKRDAVPFAPFAKTYFERYLEVRSQRYKTTAKDTAFFVTLYRDIASRIDPSSVEKLVAKYSQAFKVRVTPHKLRHTLATRLYAQTNSQVLVSNQLGHASTQVTDLYTHIINEEQKNALDSL.

The 106-residue stretch at 16-121 (VMPPYVLEYY…ALSSLYKYLT (106 aa)) folds into the Core-binding (CB) domain. In terms of domain architecture, Tyr recombinase spans 169-354 (GFLDYIDSEY…INEEQKNALD (186 aa)). Catalysis depends on residues R210, K234, H306, R309, and H332. The O-(3'-phospho-DNA)-tyrosine intermediate role is filled by Y341.

Belongs to the 'phage' integrase family. XerS subfamily.

The protein localises to the cytoplasm. Its activity is regulated as follows. FtsK is required for recombination. Its function is as follows. Site-specific tyrosine recombinase, which acts by catalyzing the cutting and rejoining of the recombining DNA molecules. Essential to convert dimers of the bacterial chromosome into monomers to permit their segregation at cell division. Binds an atypical recombination dif site (difSL). Binds preferentially to the left arm and cooperatively to the right arm of difSL. This is Tyrosine recombinase XerS from Lactococcus lactis subsp. cremoris (strain MG1363).